We begin with the raw amino-acid sequence, 574 residues long: G protein-coupled receptor kinase 4 (574 aa).

The residue at position 1 (Met1) is an N-acetylmethionine. An N-terminal region spans residues 1–153 (MELENFVANN…ECAGIVCKYL (153 aa)). An RGS domain is found at 51-171 (DFSSLCDKQP…QESTYFNRFL (121 aa)). In terms of domain architecture, Protein kinase spans 186–448 (FRQYRVLGKG…VSAVKQHPIF (263 aa)). ATP-binding positions include 192 to 200 (LGKGGFGEV) and Lys215. Catalysis depends on Asp311, which acts as the Proton acceptor. One can recognise an AGC-kinase C-terminal domain in the interval 449-514 (KDINFSRLEA…GSVTIPWQNE (66 aa)). Ser484 carries the post-translational modification Phosphoserine.

It belongs to the protein kinase superfamily. AGC Ser/Thr protein kinase family. GPRK subfamily. In terms of assembly, interacts with DRD3. In terms of processing, palmitoylated.

It is found in the cytoplasm. The protein localises to the cell cortex. It catalyses the reaction [G-protein-coupled receptor] + ATP = [G-protein-coupled receptor]-phosphate + ADP + H(+). Inhibited by heparin. Its function is as follows. Specifically phosphorylates the activated forms of G protein-coupled receptors. The polypeptide is G protein-coupled receptor kinase 4 (Grk4) (Mus musculus (Mouse)).